Here is an 835-residue protein sequence, read N- to C-terminus: MSRRKQGKPQHLSKREFSPEPLEAILTDDEPDHGPLGAPEGDHDLLTCGQCQMNFPLGDILIFIEHKRKQCNGSLCLEKGVDKPPSPSPIEMKKASNPVEVGIQVTPEDDDCLSTSSRGICPKQEHIADKLLHWRGLSSPRSAHGALIPTPGMSAEYAPQGICKDEPSSYTCTTCKQPFTSAWFLLQHAQNTHGLRIYLESEHGSPLTPRVGIPSGLGAECPSQPPLHGIHIADNNPFNLLRIPGSVSREASGLAEGRFPPTPPLFSPPPRHHLDPHRIERLGAEEMALATHHPSAFDRVLRLNPMAMEPPAMDFSRRLRELAGNTSSPPLSPGRPSPMQRLLQPFQPGSKPPFLATPPLPPLQSAPPPSQPPVKSKSCEFCGKTFKFQSNLVVHRRSHTGEKPYKCNLCDHACTQASKLKRHMKTHMHKSSPMTVKSDDGLSTASSPEPGTSDLVGSASSALKSVVAKFKSENDPNLIPENGDEEEEEDDEEEEEEEEEEEEELTESERVDYGFGLSLEAARHHENSSRGAVVGVGDEGRALPDVMQGMVLSSMQHFSEAFHQVLGEKHKRSHLAEAEGHRDTCDEDSVAGESDRIDDGTVNGRGCSPGESASGGLSKKLLLGSPSSLSPFSKRIKLEKEFDLPPAAMPNTENVYSQWLAGYAASRQLKDPFLTFGDSRQSPFASSSEHSSENGSLRFSTPPGELDGGISGRSGTGSGGSTPHISGPGPGRPSSKEGRRSDTCEYCGKVFKNCSNLTVHRRSHTGERPYKCELCNYACAQSSKLTRHMKTHGQVGKDVYKCEICKMPFSVYSTLEKHMKKWHSDRVLNNDIKTE.

Positions 1 to 12 (MSRRKQGKPQHL) are enriched in basic residues. The tract at residues 1-41 (MSRRKQGKPQHLSKREFSPEPLEAILTDDEPDHGPLGAPEG) is disordered. Positions 1-210 (MSRRKQGKPQ…SEHGSPLTPR (210 aa)) are required for nuclear body formation and for SUMO1 recruitment. The C2HC-type zinc finger occupies 45–71 (LLTCGQCQMNFPLGDILIFIEHKRKQC). The Zn(2+) site is built by C48, C51, H66, and C71. S86 carries the phosphoserine modification. A Glycyl lysine isopeptide (Lys-Gly) (interchain with G-Cter in SUMO2) cross-link involves residue K123. Position 162 is a phosphothreonine (I162). K164 participates in a covalent cross-link: Glycyl lysine isopeptide (Lys-Gly) (interchain with G-Cter in SUMO2). The segment at 170 to 193 (YTCTTCKQPFTSAWFLLQHAQNTH) adopts a C2H2-type 1 zinc-finger fold. Phosphoserine is present on S205. At P214 the chain carries Phosphothreonine. R271 is subject to Asymmetric dimethylarginine. The disordered stretch occupies residues 323-376 (AGNTSSPPLSPGRPSPMQRLLQPFQPGSKPPFLATPPLPPLQSAPPPSQPPVKS). Phosphoserine occurs at positions 332 and 337. Pro residues predominate over residues 355 to 372 (LATPPLPPLQSAPPPSQP). 2 C2H2-type zinc fingers span residues 377–399 (KSCEFCGKTFKFQSNLVVHRRSH) and 405–429 (YKCNLCDHACTQASKLKRHMKTHMH). Residues 421 to 430 (KRHMKTHMHK) show a composition bias toward basic residues. 3 disordered regions span residues 421–458 (KRHMKTHMHKSSPMTVKSDDGLSTASSPEPGTSDLVGS), 471–512 (KSEN…ERVD), and 572–619 (RSHL…GLSK). Residues 441-450 (GLSTASSPEP) are compositionally biased toward polar residues. S446 and S447 each carry phosphoserine. Residues 482–506 (NGDEEEEEDDEEEEEEEEEEEEELT) are compositionally biased toward acidic residues. The segment covering 574–584 (HLAEAEGHRDT) has biased composition (basic and acidic residues). Phosphoserine is present on S608. A Glycyl lysine isopeptide (Lys-Gly) (interchain with G-Cter in SUMO2) cross-link involves residue K620. S625 and S630 each carry phosphoserine. Residue K634 forms a Glycyl lysine isopeptide (Lys-Gly) (interchain with G-Cter in SUMO1) linkage. Positions 682 to 696 (SPFASSSEHSSENGS) are enriched in low complexity. T701 carries the phosphothreonine modification. A compositionally biased stretch (gly residues) spans 706–720 (LDGGISGRSGTGSGG). The interval 737–835 (EGRRSDTCEY…RVLNNDIKTE (99 aa)) is DNA-binding. The C2H2-type 4 zinc-finger motif lies at 742 to 764 (DTCEYCGKVFKNCSNLTVHRRSH). Zn(2+) is bound by residues C744, C747, H760, and H764. The segment covering 764–773 (HTGERPYKCE) has biased composition (polar residues). The tract at residues 765–769 (TGERP) is disordered. The segment at 770-792 (YKCELCNYACAQSSKLTRHMKTH) adopts a C2H2-type 5 zinc-finger fold. C772, C775, H788, and H792 together coordinate Zn(2+). Residues 793-799 (GQVGKDV) are disordered. The segment at 800 to 823 (YKCEICKMPFSVYSTLEKHMKKWH) adopts a C2H2-type 6 zinc-finger fold. C802, C805, H818, and H823 together coordinate Zn(2+).

Homotetrameric; self-associates via C2HC-type zinc finger domain. Interacts with MTA2, a component of the nucleosome remodeling and deacetylase (NuRD) repressor complex. Interacts with NR2F1, PIAS3, NR2F2 and NR2F6. Interacts with TBR1. In terms of processing, sumoylated with SUMO1. As to expression, isoforms are expressed in a tissue-specific fashion. Isoforms 1, isoform 2, and isoform 3 are expressed at similar levels in testis, kidney and spleen. Isoform 1 is expressed in the stomach, and isoform 2 is expressed exclusively in the lung. Overexpression following proviral integration in hematopoietic cells results in the generation of myeloid leukemia.

The protein localises to the cytoplasm. It localises to the nucleus. Transcription factor. Associated with the BAF SWI/SNF chromatin remodeling complex. Binds to the 5'-TGACCA-3' sequence motif in regulatory regions of target genes. Involved in brain development. May play a role in hematopoiesis. Essential factor in lymphopoiesis, required for B-cell formation in fetal liver. May function as a modulator of the transcriptional repression activity of NR2F2. The protein is BCL11 transcription factor A (Bcl11a) of Mus musculus (Mouse).